The primary structure comprises 320 residues: Acetyl-coenzyme A carboxylase carboxyl transferase subunit alpha (320 aa).

A CoA carboxyltransferase C-terminal domain is found at 39–293; the sequence is ALDAKAAKLL…RGAIAAMLKE (255 aa).

The protein belongs to the AccA family. Acetyl-CoA carboxylase is a heterohexamer composed of biotin carboxyl carrier protein (AccB), biotin carboxylase (AccC) and two subunits each of ACCase subunit alpha (AccA) and ACCase subunit beta (AccD).

The protein resides in the cytoplasm. The enzyme catalyses N(6)-carboxybiotinyl-L-lysyl-[protein] + acetyl-CoA = N(6)-biotinyl-L-lysyl-[protein] + malonyl-CoA. Its pathway is lipid metabolism; malonyl-CoA biosynthesis; malonyl-CoA from acetyl-CoA: step 1/1. In terms of biological role, component of the acetyl coenzyme A carboxylase (ACC) complex. First, biotin carboxylase catalyzes the carboxylation of biotin on its carrier protein (BCCP) and then the CO(2) group is transferred by the carboxyltransferase to acetyl-CoA to form malonyl-CoA. In Ruegeria pomeroyi (strain ATCC 700808 / DSM 15171 / DSS-3) (Silicibacter pomeroyi), this protein is Acetyl-coenzyme A carboxylase carboxyl transferase subunit alpha.